The sequence spans 1020 residues: X-linked retinitis pigmentosa GTPase regulator (1020 aa).

RCC1 repeat units follow at residues 54-105 (NKLY…STEG), 106-158 (GNVY…LTED), 159-208 (GRLF…VTTD), 209-261 (GELY…LTEN), 262-313 (AVYT…ITDI), and 314-367 (GLMY…FAAP). A phosphoserine mark is found at S418 and S518. Disordered stretches follow at residues 609-776 (HENN…IISK), 790-906 (EIPE…KEKA), and 989-1020 (DNKD…CTIL). Composition is skewed to basic and acidic residues over residues 618–636 (LDAK…QKES), 644–665 (EKET…EKST), 685–698 (EENK…ESCK), 704–715 (DSERESVEKPDS), 760–771 (KLIEQGNEKETK), 790–802 (EIPE…EDSK), 816–853 (ENVK…LKLE), and 883–906 (SKTE…KEKA). Residues 996–1009 (NHMSQNHQNIPPTN) are compositionally biased toward polar residues. C1017 carries the post-translational modification Cysteine methyl ester. C1017 carries S-geranylgeranyl cysteine lipidation. Positions 1018–1020 (TIL) are cleaved as a propeptide — removed in mature form.

As to quaternary structure, interacts with SPATA7. Interacts with CEP290. Interacts with WHRN. Interacts with PDE6D. Interacts with RPGRIP1. Interacts with RPGRIP1L. PDE6D, RPGRIP1 and RPGRIP1L may compete for the same binding sites. Interacts with RAB37 and RAB8A (in GDP-bound forms); functions as GEF for RAB37 and RAB8A. In terms of assembly, isoform 6 interacts with NPM1 (via C-terminus). Isoform 6 interacts with SMC1A and SMC3. In terms of processing, prenylated. Heart, brain, placenta, lung, liver, muscle, kidney, retina, pancreas and fetal retinal pigment epithelium. Isoform 3 is found only in the retina. Colocalizes with RPGRIP1 in the outer segment of rod photoreceptors and cone outer segments.

Its subcellular location is the cytoplasm. The protein localises to the cytoskeleton. It is found in the flagellum axoneme. It localises to the golgi apparatus. The protein resides in the cell projection. Its subcellular location is the cilium. The protein localises to the microtubule organizing center. It is found in the centrosome. It localises to the cilium basal body. The protein resides in the cilium axoneme. In terms of biological role, acts as a guanine-nucleotide releasing factor (GEF) for RAB8A and RAB37 by promoting the conversion of inactive RAB-GDP to the active form RAB-GTP. GEF activity towards RAB8A may facilitate ciliary trafficking by modulating ciliary intracellular localization of RAB8A. GEF activity towards RAB37 maintains autophagic homeostasis and retinal function. Involved in photoreceptor integrity. May control cilia formation by regulating actin stress filaments and cell contractility. May be involved in microtubule organization and regulation of transport in primary cilia. May play a critical role in spermatogenesis and in intraflagellar transport processes. This Homo sapiens (Human) protein is X-linked retinitis pigmentosa GTPase regulator.